The following is a 139-amino-acid chain: Transcription antitermination protein NusB (139 aa).

This sequence belongs to the NusB family.

Functionally, involved in transcription antitermination. Required for transcription of ribosomal RNA (rRNA) genes. Binds specifically to the boxA antiterminator sequence of the ribosomal RNA (rrn) operons. The protein is Transcription antitermination protein NusB of Rubrobacter xylanophilus (strain DSM 9941 / JCM 11954 / NBRC 16129 / PRD-1).